A 159-amino-acid chain; its full sequence is Small heat shock protein hspM (159 aa).

Residues 1–159 enclose the sHSP domain; the sequence is MFVLNFELAG…LSNNIKIQIN (159 aa). The interval 35-101 is disordered; sequence MNNNNKNNLQ…NNNNKSSKTN (67 aa). Composition is skewed to low complexity over residues 36 to 46 and 61 to 95; these read NNNNKNNLQIN and SSSSNNNNNNNNNNNNNNNNNNNNNNNNNSNNNNN.

It belongs to the small heat shock protein (HSP20) family.

The polypeptide is Small heat shock protein hspM (hspM) (Dictyostelium discoideum (Social amoeba)).